We begin with the raw amino-acid sequence, 510 residues long: Amidophosphoribosyltransferase (510 aa).

Cys2 serves as the catalytic Nucleophile. The Glutamine amidotransferase type-2 domain maps to 2-239; it reads CGILGIALAD…PGEAVIIPKD (238 aa). Mg(2+)-binding residues include Asp373 and Asp374.

The protein in the C-terminal section; belongs to the purine/pyrimidine phosphoribosyltransferase family. Requires Mg(2+) as cofactor.

It carries out the reaction 5-phospho-beta-D-ribosylamine + L-glutamate + diphosphate = 5-phospho-alpha-D-ribose 1-diphosphate + L-glutamine + H2O. Its pathway is purine metabolism; IMP biosynthesis via de novo pathway; N(1)-(5-phospho-D-ribosyl)glycinamide from 5-phospho-alpha-D-ribose 1-diphosphate: step 1/2. The polypeptide is Amidophosphoribosyltransferase (ADE4) (Lachancea kluyveri (Yeast)).